A 37-amino-acid polypeptide reads, in one-letter code: Large ribosomal subunit protein bL36 (37 aa).

It belongs to the bacterial ribosomal protein bL36 family.

The chain is Large ribosomal subunit protein bL36 from Salinispora tropica (strain ATCC BAA-916 / DSM 44818 / JCM 13857 / NBRC 105044 / CNB-440).